We begin with the raw amino-acid sequence, 545 residues long: MNDFWQHCSALLERELTPQQYVTWIKPLAPVAFDAAANTLSIAAPNRFKLDWVKSQFSGRIADMARDFWQAPVDVQFVLDPKAGMRAPAAAAPAPASARPASAPGSMGGSAGNGAAVDAAVGAVQAAQAARAAGTNGANNAMANLNANARAAAEQNANARAAAADDSADLDLPSLDANEAAAARRTWRPGQSASSNGNGETDSMYERSKLNPVLTFDNFVTGKANQLARAAAIQVADNPGISYNPLFLYGGVGLGKTHLIHAIGNQLLMDKAGARIRYIHAEQYVSDVVKAYQRKAFDDFKRYYHSLDLLLIDDIQFFSGKSRTQEEFFYAFEALVANKAQVIITSDTYPKEISGIDDRLISRFDSGLTVAIEPPELEMRVAILMRKAQSEFVSLNEDVAFFVAKHLRSNVRELEGALRKILAYSKFHGREITIEVTKEALKDLLTVQNRQISVENIQKTTADFYSIKVADMYSKKRPANIARPRQIAMYLAKELTQKSLPEIGELFGGRDHTTVLHAVRKIADERSKDAQLNHELHVLEQTLKG.

A domain I, interacts with DnaA modulators region spans residues 1 to 72 (MNDFWQHCSA…DMARDFWQAP (72 aa)). The segment at 72 to 208 (PVDVQFVLDP…GETDSMYERS (137 aa)) is domain II. The segment covering 90–105 (AAAPAPASARPASAPG) has biased composition (low complexity). 2 disordered regions span residues 90-112 (AAAPAPASARPASAPGSMGGSAG) and 181-204 (AAARRTWRPGQSASSNGNGETDSM). Polar residues predominate over residues 189-201 (PGQSASSNGNGET). The domain III, AAA+ region stretch occupies residues 209–425 (KLNPVLTFDN…GALRKILAYS (217 aa)). 4 residues coordinate ATP: glycine 253, glycine 255, lysine 256, and threonine 257. The tract at residues 426–545 (KFHGREITIE…LHVLEQTLKG (120 aa)) is domain IV, binds dsDNA.

This sequence belongs to the DnaA family. As to quaternary structure, oligomerizes as a right-handed, spiral filament on DNA at oriC.

Its subcellular location is the cytoplasm. In terms of biological role, plays an essential role in the initiation and regulation of chromosomal replication. ATP-DnaA binds to the origin of replication (oriC) to initiate formation of the DNA replication initiation complex once per cell cycle. Binds the DnaA box (a 9 base pair repeat at the origin) and separates the double-stranded (ds)DNA. Forms a right-handed helical filament on oriC DNA; dsDNA binds to the exterior of the filament while single-stranded (ss)DNA is stabiized in the filament's interior. The ATP-DnaA-oriC complex binds and stabilizes one strand of the AT-rich DNA unwinding element (DUE), permitting loading of DNA polymerase. After initiation quickly degrades to an ADP-DnaA complex that is not apt for DNA replication. Binds acidic phospholipids. This is Chromosomal replication initiator protein DnaA from Paraburkholderia phytofirmans (strain DSM 17436 / LMG 22146 / PsJN) (Burkholderia phytofirmans).